A 547-amino-acid polypeptide reads, in one-letter code: Serine/threonine-protein kinase RIO2 (547 aa).

A Protein kinase domain is found at 97-273 (VGNQMGVGKE…RDVKCIREFF (177 aa)). Lysine 123 is a binding site for ATP. Aspartate 228 functions as the Proton acceptor in the catalytic mechanism. Phosphoserine is present on residues serine 332, serine 337, serine 350, serine 362, serine 385, and serine 390. The segment at 352–385 (LEKEADPADESGGSWCCSSTDSKQIKDGGLPEES) is disordered. The Nuclear export signal motif lies at 399–408 (AVEEMERQVL). Residues 404–445 (ERQVLPHRSVTEFSEESRRTENDGQPGQRSPAGSEDCDDEPP) are disordered. 5 positions are modified to phosphoserine: serine 412, serine 417, serine 433, serine 437, and serine 543.

Belongs to the protein kinase superfamily. RIO-type Ser/Thr kinase family. As to quaternary structure, associated with late 40S pre-ribosomal particles. Interacts with PLK1 (via its N-terminus). Requires Mg(2+) as cofactor. Autophosphorylated (in vitro). Phosphorylation affects the timing of the metaphase-anaphase transition.

Its subcellular location is the cytoplasm. The catalysed reaction is L-seryl-[protein] + ATP = O-phospho-L-seryl-[protein] + ADP + H(+). The enzyme catalyses L-threonyl-[protein] + ATP = O-phospho-L-threonyl-[protein] + ADP + H(+). In terms of biological role, serine/threonine-protein kinase involved in the final steps of cytoplasmic maturation of the 40S ribosomal subunit. Involved in export of the 40S pre-ribosome particles (pre-40S) from the nucleus to the cytoplasm. Its kinase activity is required for the release of NOB1, PNO1 and LTV1 from the late pre-40S and the processing of 18S-E pre-rRNA to the mature 18S rRNA. May regulate the timing of the metaphase-anaphase transition during mitotic progression, and its phosphorylation, may regulate this function. The chain is Serine/threonine-protein kinase RIO2 (Riok2) from Mus musculus (Mouse).